A 142-amino-acid polypeptide reads, in one-letter code: Transcriptional regulator MraZ (142 aa).

2 SpoVT-AbrB domains span residues 5 to 47 (NYQH…TNQE) and 76 to 119 (SLTV…DINA).

The protein belongs to the MraZ family. Forms oligomers.

The protein resides in the cytoplasm. The protein localises to the nucleoid. This Mycoplasmoides gallisepticum (strain R(low / passage 15 / clone 2)) (Mycoplasma gallisepticum) protein is Transcriptional regulator MraZ.